A 122-amino-acid polypeptide reads, in one-letter code: Large ribosomal subunit protein bL17 (122 aa).

The protein belongs to the bacterial ribosomal protein bL17 family. In terms of assembly, part of the 50S ribosomal subunit. Contacts protein L32.

This is Large ribosomal subunit protein bL17 from Staphylococcus aureus (strain Mu3 / ATCC 700698).